Consider the following 130-residue polypeptide: Small ribosomal subunit protein uS8 (130 aa).

This sequence belongs to the universal ribosomal protein uS8 family.

The chain is Small ribosomal subunit protein uS8 (RPS15A) from Paracentrotus lividus (Common sea urchin).